Reading from the N-terminus, the 119-residue chain is Flagellar transcriptional regulator FlhD (119 aa).

The protein belongs to the FlhD family. In terms of assembly, homodimer; disulfide-linked. Forms a heterohexamer composed of two FlhC and four FlhD subunits. Each FlhC binds a FlhD dimer, forming a heterotrimer, and a hexamer assembles by dimerization of two heterotrimers.

The protein localises to the cytoplasm. In terms of biological role, functions in complex with FlhC as a master transcriptional regulator that regulates transcription of several flagellar and non-flagellar operons by binding to their promoter region. Activates expression of class 2 flagellar genes, including fliA, which is a flagellum-specific sigma factor that turns on the class 3 genes. Also regulates genes whose products function in a variety of physiological pathways. The polypeptide is Flagellar transcriptional regulator FlhD (Shigella boydii serotype 4 (strain Sb227)).